Consider the following 227-residue polypeptide: MKTQKQQYVTIKGTKNGLTLQLNDDCSFDDLLSGLRELLLLEQYTDGREGHKVNVHIKLGFRYLTEDQEMRLTEAVSENEHLVIHSIESDVMSTEEAKRLKAEAEITSVAKIVRSGQVLYVEGDLLLIGDVNPGGTIRAGGNIFVLGALKGVAHAGCNGNKQAVIAASRMIPTQLRIAQVFNRAPDQKEDGNEMECAYLDIDGNMIIERLQQLAHIRPNLTRLEGGM.

The protein belongs to the MinC family. As to quaternary structure, interacts with MinD and FtsZ.

In terms of biological role, cell division inhibitor that blocks the formation of polar Z ring septums. Rapidly oscillates between the poles of the cell to destabilize FtsZ filaments that have formed before they mature into polar Z rings. Prevents FtsZ polymerization. The protein is Probable septum site-determining protein MinC of Bacillus pumilus (strain SAFR-032).